The sequence spans 734 residues: Photosystem I P700 chlorophyll a apoprotein A2 (734 aa).

A run of 8 helical transmembrane segments spans residues 46–69 (IFAS…FHVA), 135–158 (LYTG…LHLQ), 175–199 (LNHH…HVAI), 273–291 (IAHH…GHMY), 330–353 (LHFQ…QHMY), 369–395 (AALY…IFFI), 417–439 (AIIS…LYVH), and 517–535 (FLVH…LILV). The [4Fe-4S] cluster site is built by cysteine 559 and cysteine 568. A run of 2 helical transmembrane segments spans residues 575-596 (AFYL…YWHW) and 643-665 (LSVW…MFLI). Chlorophyll a contacts are provided by histidine 654, methionine 662, and tyrosine 670. Tryptophan 671 serves as a coordination point for phylloquinone. Residues 707–727 (LVGLAHFSVGYIFTYAAFLIA) traverse the membrane as a helical segment.

The protein belongs to the PsaA/PsaB family. As to quaternary structure, the PsaA/B heterodimer binds the P700 chlorophyll special pair and subsequent electron acceptors. PSI consists of a core antenna complex that captures photons, and an electron transfer chain that converts photonic excitation into a charge separation. The eukaryotic PSI reaction center is composed of at least 11 subunits. Requires P700 is a chlorophyll a/chlorophyll a' dimer, A0 is one or more chlorophyll a, A1 is one or both phylloquinones and FX is a shared 4Fe-4S iron-sulfur center. as cofactor.

The protein resides in the plastid. It is found in the chloroplast thylakoid membrane. It carries out the reaction reduced [plastocyanin] + hnu + oxidized [2Fe-2S]-[ferredoxin] = oxidized [plastocyanin] + reduced [2Fe-2S]-[ferredoxin]. In terms of biological role, psaA and PsaB bind P700, the primary electron donor of photosystem I (PSI), as well as the electron acceptors A0, A1 and FX. PSI is a plastocyanin-ferredoxin oxidoreductase, converting photonic excitation into a charge separation, which transfers an electron from the donor P700 chlorophyll pair to the spectroscopically characterized acceptors A0, A1, FX, FA and FB in turn. Oxidized P700 is reduced on the lumenal side of the thylakoid membrane by plastocyanin. In Nicotiana tabacum (Common tobacco), this protein is Photosystem I P700 chlorophyll a apoprotein A2.